The primary structure comprises 607 residues: MKWTILTALLIISAESKNLYKRDSEPHIRFLGEVYKKVDTIDFRGLVLITLAQHLQKCPFEELAKQVEQITTLAQACAAGARHADCATPLITLFLNRICAVPELSATYDWSTECCAKSDPERHQCFRAHRNPAPGTHYKRPEPEELCESYKKNKEDVLAHYIYEVSRGHPVLYSPAVLGFAYQFNGICSHCCEEEDKTTCFKDRMTQLKKALHIVEVQQKESCRILDNFGVRVLQALKLVKISKKNPKATFEVAQKLTSEVTHLNEDCCHGDMLECMIERMELTEHTCEHHEDISTKLKTCCEKPLIERTHCIVNLENDDIPEDLPKKVTKFVEDPEVCKLFADKKDIFLAEFLYEYGRRHPELSDQLLLRIAKGYEHQLEKCCELENFLECLKDGEHVLADAIKESTELTEKDCAIQQKLGDYLFQNVLLIRYTKKMPHVTTPSLIHITKHMTEVGDKCCALPNTQKMPCAEGGLSLIIGEFCEMEKTHPINEHVKNCCWKSYSNRRNCFTNLGPDDSYVAPEITDDTFHFTEDLCTLPEEELKNKKQGFIATLVKVKPHVTDELYGQIAVEFTKMREKCCAAEDHQACFNAEEPILIEHCKQLAA.

An N-terminal signal peptide occupies residues Met1–Ser16. The propeptide occupies Lys17–Tyr20. Albumin domains are found at residues Leu19–Lys209, Lys210–Ala401, and Ala403–Glu600. His27 is a binding site for Cu cation. Intrachain disulfides connect Cys77-Cys86, Cys99-Cys115, Cys114-Cys125, Cys147-Cys192, Cys191-Cys200, Cys223-Cys269, Cys268-Cys276, Cys288-Cys302, Cys301-Cys312, Cys339-Cys384, Cys383-Cys392, Cys415-Cys461, Cys460-Cys471, Cys484-Cys500, Cys499-Cys510, Cys537-Cys582, and Cys581-Cys590. Residues His270 and Asp272 each coordinate Zn(2+). Ca(2+) contacts are provided by Asp272 and Glu275.

It belongs to the ALB/AFP/VDB family. As to expression, plasma. In the skin, widely distributed around the membranes of epithelial layer cells and within the stratum spongiosum of the dermis (at protein level).

The protein localises to the secreted. Serum albumin, the main protein of plasma, has a good binding capacity for water, Ca(2+), Na(+), K(+), fatty acids, hormones, bilirubin and drugs. Its main function is the regulation of the colloidal osmotic pressure of blood. Potent inhibitor of trypsin but has no inhibitory effect on thrombin, chymotrypsin, elastase and subtilisin. This chain is Serum albumin, found in Bombina maxima (Giant fire-bellied toad).